Reading from the N-terminus, the 571-residue chain is Proline--tRNA ligase (571 aa).

Belongs to the class-II aminoacyl-tRNA synthetase family. ProS type 1 subfamily. In terms of assembly, homodimer.

Its subcellular location is the cytoplasm. The catalysed reaction is tRNA(Pro) + L-proline + ATP = L-prolyl-tRNA(Pro) + AMP + diphosphate. Catalyzes the attachment of proline to tRNA(Pro) in a two-step reaction: proline is first activated by ATP to form Pro-AMP and then transferred to the acceptor end of tRNA(Pro). As ProRS can inadvertently accommodate and process non-cognate amino acids such as alanine and cysteine, to avoid such errors it has two additional distinct editing activities against alanine. One activity is designated as 'pretransfer' editing and involves the tRNA(Pro)-independent hydrolysis of activated Ala-AMP. The other activity is designated 'posttransfer' editing and involves deacylation of mischarged Ala-tRNA(Pro). The misacylated Cys-tRNA(Pro) is not edited by ProRS. The chain is Proline--tRNA ligase from Pseudomonas putida (strain ATCC 47054 / DSM 6125 / CFBP 8728 / NCIMB 11950 / KT2440).